The following is a 511-amino-acid chain: Sphingosine-1-phosphate transporter MFSD2B (511 aa).

Helical transmembrane passes span 108 to 128 (MPWMLGCTPFLVVSYFLLWFV), 136 to 156 (VLWYLAFFSCFQALSTAYHVP), 236 to 256 (IAAGIIGCLYLLCISVLFLGV), 280 to 300 (TMQFGPYLNLISSFLLISAAV), 323 to 343 (NLVLTILIAAVLSIPFWQWFL), 357 to 377 (LMIPFSIMLVTISSLVVAYVV), 379 to 399 (VASGLSIAASLLLPWSMLPDV), 415 to 435 (AIFYSSFVFFTKLSAGIALGI), and 462 to 482 (LLIGAAPALMIIIGLTILAFY).

It belongs to the major facilitator superfamily.

The protein resides in the cell membrane. It carries out the reaction sphing-4-enine 1-phosphate(in) = sphing-4-enine 1-phosphate(out). The enzyme catalyses sphinganine 1-phosphate(in) = sphinganine 1-phosphate(out). The catalysed reaction is sphinga-4E,14Z-dienine-1-phosphate(in) = sphinga-4E,14Z-dienine-1-phosphate(out). Its function is as follows. Lipid transporter that specifically mediates export of sphingosine-1-phosphate in red blood cells and platelets. Sphingosine-1-phosphate is a signaling sphingolipid and its export from red blood cells into in the plasma is required for red blood cell morphology. Sphingosine-1-phosphate export from platelets is required for platelet aggregation and thrombus formation. In addition to export, also able to mediate S1P import. This chain is Sphingosine-1-phosphate transporter MFSD2B, found in Xenopus tropicalis (Western clawed frog).